The following is a 100-amino-acid chain: uncharacterized protein (100 aa).

2 helical membrane-spanning segments follow: residues 30-50 (FHIP…PLAF) and 69-89 (FLLI…LPFF).

It localises to the cytoplasm. The protein resides in the nucleus membrane. This is an uncharacterized protein from Schizosaccharomyces pombe (strain 972 / ATCC 24843) (Fission yeast).